The chain runs to 492 residues: 2-succinylbenzoate--CoA ligase (492 aa).

This sequence belongs to the ATP-dependent AMP-binding enzyme family. MenE subfamily.

It carries out the reaction 2-succinylbenzoate + ATP + CoA = 2-succinylbenzoyl-CoA + AMP + diphosphate. It functions in the pathway quinol/quinone metabolism; 1,4-dihydroxy-2-naphthoate biosynthesis; 1,4-dihydroxy-2-naphthoate from chorismate: step 5/7. It participates in quinol/quinone metabolism; menaquinone biosynthesis. Functionally, converts 2-succinylbenzoate (OSB) to 2-succinylbenzoyl-CoA (OSB-CoA). The sequence is that of 2-succinylbenzoate--CoA ligase from Staphylococcus aureus (strain Mu3 / ATCC 700698).